The chain runs to 435 residues: Glutamate-1-semialdehyde 2,1-aminomutase (435 aa).

The residue at position 266 (K266) is an N6-(pyridoxal phosphate)lysine.

Belongs to the class-III pyridoxal-phosphate-dependent aminotransferase family. HemL subfamily. Homodimer. Pyridoxal 5'-phosphate serves as cofactor.

Its subcellular location is the cytoplasm. It catalyses the reaction (S)-4-amino-5-oxopentanoate = 5-aminolevulinate. It participates in porphyrin-containing compound metabolism; protoporphyrin-IX biosynthesis; 5-aminolevulinate from L-glutamyl-tRNA(Glu): step 2/2. This chain is Glutamate-1-semialdehyde 2,1-aminomutase, found in Nitrosomonas europaea (strain ATCC 19718 / CIP 103999 / KCTC 2705 / NBRC 14298).